We begin with the raw amino-acid sequence, 655 residues long: MSASHFREQLALCITLAVLAAASGDYRANMFLNGQYQNGIKDQKENNLLVNPSTNVFLNHAIISRQASPFQGPTYLPPKEFLKCAPGQQCVRSGQCLNGYFAQQLPKIQNCDPETTVCCTYRPPPTTTTTTTTSVPVANCAYDSDCVTPDNCRNGEISAINYVKKQGPNRCPAPNICCRIPSTTLTEDGYIFNLPEKTFPLPTKPAVLAMPSTQAPFRPQPTTAVPASRPTIEYLPPSTTQHPSYEKVQTSRRPVYLPPSPATESASSLIPKIRPRPEPRPQPTRRPTNEYLPPAAANEIPRFEPDRAPQPSNQKPIYRGEDQLSPQIFPTPQPANVPKHFAKCASALVCTSENFCNAIGVLSETPVELSPMEAAFRVPLTDCLQTENGSPGKCCRDPNYVDPWPVNLAGVCATRNKRTKPTGVKDLDANFAEIPWQAMILRESSKTLICGGAIIGDQFVLSSASCVNGLPVTDIRVKAGEWELGSTNEPLPFQLTGVKTVDVHPDYDPSTNSHDLAIIRLERRLEFASHIQPICISDEDPKDSEQCFTSGWGKQALSIHEEGALMHVTDTLPQARSECSADSSSVCSATKFDSCQFDVGSALACGSGSSVRLKGIFAGENSCGEGQTVRFAKPDIKWINTAFAENNKPLLLKRF.

Positions 1 to 24 (MSASHFREQLALCITLAVLAAASG) are cleaved as a signal peptide. Composition is skewed to polar residues over residues 213–225 (TQAP…TTAV) and 237–252 (PSTT…QTSR). A disordered region spans residues 213-319 (TQAPFRPQPT…QPSNQKPIYR (107 aa)). The interval 343 to 407 (KCASALVCTS…PNYVDPWPVN (65 aa)) is CLIP. 7 cysteine pairs are disulfide-bonded: Cys-344/Cys-394, Cys-350/Cys-383, Cys-356/Cys-395, Cys-450/Cys-466, Cys-547/Cys-605, Cys-579/Cys-587, and Cys-595/Cys-623. The Peptidase S1 domain occupies 421 to 644 (PTGVKDLDAN…DIKWINTAFA (224 aa)).

It belongs to the peptidase S1 family.

The protein localises to the secreted. Inactive serine protease that plays a role in germ-band retraction and dorsal closure morphogenesis in embryogenesis; contributes to amnioserosa attachment and epithelial apico-basal polarity by regulating the localization of laminin LanA on the apical side of the amnioserosa epithelium. Contributes to epithelial morphogenesis probably by regulating the bsk/JNK pathway, as part of a negative-feedback loop, and by modulating the cross-talk between the Egfr, bsk/JNK and dpp signal transduction pathways. In larval development, antagonizes the morphogenetic movements controlled by the bsk/JNK signaling including male genitalia formation and thorax development. The sequence is that of Inactive serine protease scarface from Drosophila melanogaster (Fruit fly).